A 406-amino-acid polypeptide reads, in one-letter code: Tryptophan synthase beta chain (406 aa).

N6-(pyridoxal phosphate)lysine is present on Lys99.

It belongs to the TrpB family. As to quaternary structure, tetramer of two alpha and two beta chains. Pyridoxal 5'-phosphate is required as a cofactor.

It catalyses the reaction (1S,2R)-1-C-(indol-3-yl)glycerol 3-phosphate + L-serine = D-glyceraldehyde 3-phosphate + L-tryptophan + H2O. It functions in the pathway amino-acid biosynthesis; L-tryptophan biosynthesis; L-tryptophan from chorismate: step 5/5. In terms of biological role, the beta subunit is responsible for the synthesis of L-tryptophan from indole and L-serine. This is Tryptophan synthase beta chain from Phenylobacterium zucineum (strain HLK1).